A 192-amino-acid polypeptide reads, in one-letter code: Peptide deformylase (192 aa).

C108 and H150 together coordinate Fe cation. Residue E151 is part of the active site. H154 contacts Fe cation.

This sequence belongs to the polypeptide deformylase family. The cofactor is Fe(2+).

It carries out the reaction N-terminal N-formyl-L-methionyl-[peptide] + H2O = N-terminal L-methionyl-[peptide] + formate. In terms of biological role, removes the formyl group from the N-terminal Met of newly synthesized proteins. Requires at least a dipeptide for an efficient rate of reaction. N-terminal L-methionine is a prerequisite for activity but the enzyme has broad specificity at other positions. The chain is Peptide deformylase from Opitutus terrae (strain DSM 11246 / JCM 15787 / PB90-1).